The chain runs to 347 residues: 4-hydroxythreonine-4-phosphate dehydrogenase (347 aa).

H137 and T138 together coordinate substrate. Residues H174, H219, and H274 each contribute to the a divalent metal cation site. Substrate is bound by residues K282, N291, and R300.

This sequence belongs to the PdxA family. As to quaternary structure, homodimer. Zn(2+) serves as cofactor. Requires Mg(2+) as cofactor. The cofactor is Co(2+).

It is found in the cytoplasm. It carries out the reaction 4-(phosphooxy)-L-threonine + NAD(+) = 3-amino-2-oxopropyl phosphate + CO2 + NADH. The protein operates within cofactor biosynthesis; pyridoxine 5'-phosphate biosynthesis; pyridoxine 5'-phosphate from D-erythrose 4-phosphate: step 4/5. Catalyzes the NAD(P)-dependent oxidation of 4-(phosphooxy)-L-threonine (HTP) into 2-amino-3-oxo-4-(phosphooxy)butyric acid which spontaneously decarboxylates to form 3-amino-2-oxopropyl phosphate (AHAP). The protein is 4-hydroxythreonine-4-phosphate dehydrogenase of Cupriavidus pinatubonensis (strain JMP 134 / LMG 1197) (Cupriavidus necator (strain JMP 134)).